A 158-amino-acid polypeptide reads, in one-letter code: C-type lectin lectoxin-Thr1 (158 aa).

Residues 1 to 23 (MGRFIFATLGLLLVAFSINGAKG) form the signal peptide. Intrachain disulfides connect Cys26-Cys37, Cys54-Cys154, and Cys129-Cys146. The 123-residue stretch at 33-155 (LKGFCYKVFN…CASTRAYLCK (123 aa)) folds into the C-type lectin domain. The Mannose-binding signature appears at 119-121 (EPN). Residues Glu127, Asn142, and Asp143 each coordinate Ca(2+).

The protein belongs to the true venom lectin family. In terms of tissue distribution, expressed by the venom gland.

Its subcellular location is the secreted. In terms of biological role, mannose-binding lectin which recognizes specific carbohydrate structures and agglutinates a variety of animal cells by binding to cell-surface glycoproteins and glycolipids. May be a calcium-dependent lectin. In Thrasops jacksonii (Jackson's black tree snake), this protein is C-type lectin lectoxin-Thr1.